A 539-amino-acid polypeptide reads, in one-letter code: UDP-N-acetylmuramate--L-alanine ligase (539 aa).

Residue 165–171 (GTHGKTT) participates in ATP binding.

This sequence belongs to the MurCDEF family.

It is found in the cytoplasm. It catalyses the reaction UDP-N-acetyl-alpha-D-muramate + L-alanine + ATP = UDP-N-acetyl-alpha-D-muramoyl-L-alanine + ADP + phosphate + H(+). The protein operates within cell wall biogenesis; peptidoglycan biosynthesis. Cell wall formation. This chain is UDP-N-acetylmuramate--L-alanine ligase, found in Trichodesmium erythraeum (strain IMS101).